A 455-amino-acid chain; its full sequence is Bifunctional protein GlmU (455 aa).

Residues M1–R226 are pyrophosphorylase. Residues L8–G11, K22, Q73, G78–T79, Y99–D101, G136, E151, N166, and N224 each bind UDP-N-acetyl-alpha-D-glucosamine. A Mg(2+)-binding site is contributed by D101. N224 provides a ligand contact to Mg(2+). A linker region spans residues R227 to Q247. The segment at G248 to S455 is N-acetyltransferase. Residues R330 and K348 each coordinate UDP-N-acetyl-alpha-D-glucosamine. The Proton acceptor role is filled by H360. Y363 and N374 together coordinate UDP-N-acetyl-alpha-D-glucosamine. Residues A377, N383 to Y384, S402, A420, and R437 contribute to the acetyl-CoA site.

The protein in the N-terminal section; belongs to the N-acetylglucosamine-1-phosphate uridyltransferase family. This sequence in the C-terminal section; belongs to the transferase hexapeptide repeat family. In terms of assembly, homotrimer. It depends on Mg(2+) as a cofactor.

It localises to the cytoplasm. It carries out the reaction alpha-D-glucosamine 1-phosphate + acetyl-CoA = N-acetyl-alpha-D-glucosamine 1-phosphate + CoA + H(+). The catalysed reaction is N-acetyl-alpha-D-glucosamine 1-phosphate + UTP + H(+) = UDP-N-acetyl-alpha-D-glucosamine + diphosphate. It functions in the pathway nucleotide-sugar biosynthesis; UDP-N-acetyl-alpha-D-glucosamine biosynthesis; N-acetyl-alpha-D-glucosamine 1-phosphate from alpha-D-glucosamine 6-phosphate (route II): step 2/2. Its pathway is nucleotide-sugar biosynthesis; UDP-N-acetyl-alpha-D-glucosamine biosynthesis; UDP-N-acetyl-alpha-D-glucosamine from N-acetyl-alpha-D-glucosamine 1-phosphate: step 1/1. It participates in bacterial outer membrane biogenesis; LPS lipid A biosynthesis. Functionally, catalyzes the last two sequential reactions in the de novo biosynthetic pathway for UDP-N-acetylglucosamine (UDP-GlcNAc). The C-terminal domain catalyzes the transfer of acetyl group from acetyl coenzyme A to glucosamine-1-phosphate (GlcN-1-P) to produce N-acetylglucosamine-1-phosphate (GlcNAc-1-P), which is converted into UDP-GlcNAc by the transfer of uridine 5-monophosphate (from uridine 5-triphosphate), a reaction catalyzed by the N-terminal domain. The polypeptide is Bifunctional protein GlmU (Pseudomonas putida (strain GB-1)).